Consider the following 485-residue polypeptide: Alpha-amylase (485 aa).

A signal peptide spans 1–18 (MQHLSILLVVLGSSIAFA). Gln19 carries the post-translational modification Pyrrolidone carboxylic acid. Cysteines 46 and 102 form a disulfide. 3 residues coordinate Ca(2+): Asn116, Arg163, and Asp172. Residues Cys152 and Cys165 are joined by a disulfide bond. Arg200 lines the chloride pocket. Residue Asp202 is the Nucleophile of the active site. Position 206 (His206) interacts with Ca(2+). Glu238 acts as the Proton donor in catalysis. Asn301 contributes to the chloride binding site. A disulfide bond links Cys369 and Cys375. N-linked (GlcNAc...) asparagine glycans are attached at residues Asn423 and Asn449. Cys440 and Cys452 form a disulfide bridge.

Belongs to the glycosyl hydrolase 13 family. Monomer. The cofactor is Ca(2+). Chloride serves as cofactor.

It carries out the reaction Endohydrolysis of (1-&gt;4)-alpha-D-glucosidic linkages in polysaccharides containing three or more (1-&gt;4)-alpha-linked D-glucose units.. In terms of biological role, involved in the digestion of starch. This chain is Alpha-amylase, found in Hypothenemus hampei (Coffee berry borer).